Here is a 455-residue protein sequence, read N- to C-terminus: Alcohol acyl transferase 1 allele GSb (455 aa).

Active-site proton acceptor residues include H164 and N385.

It belongs to the plant acyltransferase family. Expressed at very low levels in the skin of ripe fruit.

Involved in the biosynthesis of volatile esters which confer ripe apple fruit flavor. Alcohol acyl transferase that can use a wide range of alcohols as substrate to produce esters. The polypeptide is Alcohol acyl transferase 1 allele GSb (Malus domestica (Apple)).